The chain runs to 428 residues: Enolase 1 (428 aa).

Positions 38 to 58 are disordered; that stretch reads EVPSGASTGENEAVELRDGGS. Q163 contacts (2R)-2-phosphoglycerate. E205 acts as the Proton donor in catalysis. Mg(2+) is bound by residues D242, E286, and D313. Residues K338, R367, S368, and K389 each coordinate (2R)-2-phosphoglycerate. K338 functions as the Proton acceptor in the catalytic mechanism.

It belongs to the enolase family. The cofactor is Mg(2+).

The protein localises to the cytoplasm. It is found in the secreted. The protein resides in the cell surface. The enzyme catalyses (2R)-2-phosphoglycerate = phosphoenolpyruvate + H2O. It participates in carbohydrate degradation; glycolysis; pyruvate from D-glyceraldehyde 3-phosphate: step 4/5. Its function is as follows. Catalyzes the reversible conversion of 2-phosphoglycerate (2-PG) into phosphoenolpyruvate (PEP). It is essential for the degradation of carbohydrates via glycolysis. This is Enolase 1 from Lactobacillus gasseri (strain ATCC 33323 / DSM 20243 / BCRC 14619 / CIP 102991 / JCM 1131 / KCTC 3163 / NCIMB 11718 / NCTC 13722 / AM63).